We begin with the raw amino-acid sequence, 792 residues long: Kinesin-like protein KIF3C (792 aa).

The Kinesin motor domain maps to 10 to 363; sequence ALKVVARCRP…LRFANRAKNI (354 aa). 97-104 is an ATP binding site; it reads GQTGTGKT. Disordered regions lie at residues 249–287, 397–418, and 749–792; these read GSERQNKAGPNTTGGTATQPTGGGGGGGGGGGGGERPKE, MLGKRLRRKSSRRKKAVSAPAG, and RPST…LDHE. The segment covering 257–268 has biased composition (low complexity); the sequence is GPNTTGGTATQP. Residues 269 to 282 show a composition bias toward gly residues; the sequence is TGGGGGGGGGGGGG. Positions 374–627 form a coiled coil; that stretch reads KDTLLREFQE…QNEQTRELKL (254 aa). Residues 397–412 are compositionally biased toward basic residues; sequence MLGKRLRRKSSRRKKA. The tract at residues 628-792 is globular; that stretch reads KYLIIENFIP…LRPTTVLDHE (165 aa). A compositionally biased stretch (low complexity) spans 773 to 792; sequence AHASLAASAALRPTTVLDHE.

Belongs to the TRAFAC class myosin-kinesin ATPase superfamily. Kinesin family. Kinesin II subfamily. As to quaternary structure, heterodimer of KIF3A and KIF3C.

It localises to the cytoplasm. The protein resides in the cytoskeleton. Its function is as follows. Microtubule-based anterograde translocator for membranous organelles. The protein is Kinesin-like protein KIF3C (KIF3C) of Bos taurus (Bovine).